Reading from the N-terminus, the 298-residue chain is ATP synthase gamma chain (298 aa).

This sequence belongs to the ATPase gamma chain family. In terms of assembly, F-type ATPases have 2 components, CF(1) - the catalytic core - and CF(0) - the membrane proton channel. CF(1) has five subunits: alpha(3), beta(3), gamma(1), delta(1), epsilon(1). CF(0) has three main subunits: a, b and c.

The protein resides in the cell inner membrane. In terms of biological role, produces ATP from ADP in the presence of a proton gradient across the membrane. The gamma chain is believed to be important in regulating ATPase activity and the flow of protons through the CF(0) complex. The sequence is that of ATP synthase gamma chain from Acidithiobacillus ferridurans.